A 443-amino-acid polypeptide reads, in one-letter code: D-serine dehydratase (443 aa).

Lys118 bears the N6-(pyridoxal phosphate)lysine mark.

Belongs to the serine/threonine dehydratase family. DsdA subfamily. In terms of assembly, monomer. Pyridoxal 5'-phosphate is required as a cofactor.

The catalysed reaction is D-serine = pyruvate + NH4(+). This chain is D-serine dehydratase, found in Escherichia coli O17:K52:H18 (strain UMN026 / ExPEC).